The following is a 195-amino-acid chain: uncharacterized protein (195 aa).

Residues 24–141 (NTDENLKLIF…VFLADKISWD (118 aa)) form the HD domain.

This is an uncharacterized protein from Lactococcus lactis subsp. cremoris (Streptococcus cremoris).